A 122-amino-acid chain; its full sequence is Large ribosomal subunit protein uL18 (122 aa).

A disordered region spans residues 1–20 (MFKKVSKNANRLSRHQRVRN).

This sequence belongs to the universal ribosomal protein uL18 family. As to quaternary structure, part of the 50S ribosomal subunit; part of the 5S rRNA/L5/L18/L25 subcomplex. Contacts the 5S and 23S rRNAs.

Its function is as follows. This is one of the proteins that bind and probably mediate the attachment of the 5S RNA into the large ribosomal subunit, where it forms part of the central protuberance. This Alkaliphilus oremlandii (strain OhILAs) (Clostridium oremlandii (strain OhILAs)) protein is Large ribosomal subunit protein uL18.